The sequence spans 467 residues: MSGKVVQIIGPVLDIEFPSGQLPKLLNAIVVRDGEKSVTCEVQQLLGDNRVRAIAMSSTDGLRRGIQAEDTGAPISVPVGKVTLGRIFNVLGDCVDNLGTVTRQAVQPIHKQAPSFVQLETKPSVFETGIKVVDLLAPYRRGGKIGLFGGAGVGKTVLIMELINNIAKAHGGVSVFAGVGERTREGNDLYEEMKASGVIQSQNLSESKVALCYGQMNEPPGARMRVGLTALTMAEHFRDINKQDVLLFIDNIFRFVQAGSEVSALLGRMPSAVGYQPTLATEMGALQERITSTVDGSITSIQAVYVPADDLTDPAPATTFAHLDATTVLSRGLAAKGIYPAVDPLDSTSTMLQPNIVGEAHYQTASRVKQTLQRYKELQDIIAILGLDELSEEDRLLVARARKIERFLSQPFFVAEVFTGSPGKYVSLEESIKGFKMILDGELDDLPEQAFYLVGNIEEAIQKAQKL.

An ATP-binding site is contributed by 149 to 156 (GGAGVGKT).

It belongs to the ATPase alpha/beta chains family. F-type ATPases have 2 components, CF(1) - the catalytic core - and CF(0) - the membrane proton channel. CF(1) has five subunits: alpha(3), beta(3), gamma(1), delta(1), epsilon(1). CF(0) has four main subunits: a(1), b(1), b'(1) and c(9-12).

Its subcellular location is the plastid. The protein resides in the chloroplast thylakoid membrane. The enzyme catalyses ATP + H2O + 4 H(+)(in) = ADP + phosphate + 5 H(+)(out). In terms of biological role, produces ATP from ADP in the presence of a proton gradient across the membrane. The catalytic sites are hosted primarily by the beta subunits. The polypeptide is ATP synthase subunit beta, chloroplastic (Cyanidioschyzon merolae (strain NIES-3377 / 10D) (Unicellular red alga)).